Reading from the N-terminus, the 2332-residue chain is Phosphatidylinositol phosphatase PTPRQ (2332 aa).

The signal sequence occupies residues 1–35; it reads MKKVPIKPEQPEKLRAFNISTHSFSLHWSLPSGHV. Fibronectin type-III domains follow at residues 36–99, 100–195, 199–294, 350–438, 441–539, 514–606, 610–705, 710–799, 804–894, 899–988, 993–1093, 1098–1190, 1192–1282, 1287–1380, 1384–1470, 1474–1578, 1583–1681, and 1686–1787; these read ERYQ…TKPG, PPVF…TAES, KVVN…SSST, PPQN…PPDV, AVFD…SHPD, GLYE…SVRT, VPSS…TSED, SPQD…TSET, APEN…TEED, PPQD…TPEG, PPKD…TDQD, FVGN…TEED, PETS…TDES, PPQN…TQES, VVQN…LPET, VPTN…TLPG, PPEN…TLES, and PPNN…IKAP. Residues 36–1947 lie on the Extracellular side of the membrane; it reads ERYQVDLVPD…GEGLSERTVE (1912 aa). A glycan (N-linked (GlcNAc...) asparagine) is linked at Asn94. 2 N-linked (GlcNAc...) asparagine glycosylation sites follow: Asn202 and Asn394. 4 N-linked (GlcNAc...) asparagine glycosylation sites follow: Asn944, Asn1038, Asn1080, and Asn1101. N-linked (GlcNAc...) asparagine glycosylation is found at Asn1290 and Asn1295. A glycan (N-linked (GlcNAc...) asparagine) is linked at Asn1844. Residues 1948–1968 traverse the membrane as a helical segment; that stretch reads IILSVTLCILSIILLGTAIFA. At 1969-2332 the chain is on the cytoplasmic side; the sequence is FARIRQKQKE…VELEWEETTM (364 aa). Residues 2036–2292 enclose the Tyrosine-protein phosphatase domain; it reads FQEEFSELPK…IFLHQCILDL (257 aa). Cys2233 functions as the Phosphocysteine intermediate in the catalytic mechanism.

The protein belongs to the protein-tyrosine phosphatase family. Receptor class 2A subfamily. In terms of assembly, interacts with TPRN. TPRN, CLIC5 and PTPQR form concentric rings at the base of stereocilia and may form a complex. As to expression, in developing kidney, it localizes to the basal membrane of podocytes, beginning when podocyte progenitors can first be identified in the embryonic kidney (at protein level). Expressed in lung and kidney.

It is found in the cell projection. Its subcellular location is the stereocilium. The protein resides in the apical cell membrane. It localises to the basal cell membrane. The enzyme catalyses a 1,2-diacyl-sn-glycero-3-phospho-(1D-myo-inositol-3,4,5-trisphosphate) + H2O = a 1,2-diacyl-sn-glycero-3-phospho-(1D-myo-inositol-4,5-bisphosphate) + phosphate. The catalysed reaction is a 1,2-diacyl-sn-glycero-3-phospho-(1D-myo-inositol-3,4,5-trisphosphate) + H2O = a 1,2-diacyl-sn-glycero-3-phospho-(1D-myo-inositol-3,4-bisphosphate) + phosphate. It carries out the reaction a 1,2-diacyl-sn-glycero-3-phospho-(1D-myo-inositol-3,5-bisphosphate) + H2O = a 1,2-diacyl-sn-glycero-3-phospho-(1D-myo-inositol-5-phosphate) + phosphate. It catalyses the reaction a 1,2-diacyl-sn-glycero-3-phospho-(1D-myo-inositol-3,5-bisphosphate) + H2O = a 1,2-diacyl-sn-glycero-3-phospho-(1D-myo-inositol-3-phosphate) + phosphate. Its function is as follows. Dephosphorylates phosphatidylinositol phosphates, such as phosphatidylinositol 3,4,5-trisphosphate (PIP3) and phosphatidylinositol 3,5-diphosphates, with preference for PIP3. Phosphate can be hydrolyzed from the D3 and D5 positions in the inositol ring. Has low tyrosine-protein phosphatase activity in vitro; however, the relevance of such activity in vivo is unclear. Plays an important role in adipogenesis of mesenchymal stem cells (MSCs). Regulates the phosphorylation state of AKT1 by regulating the levels of PIP3 in MSCs and preadipocyte cells. Required for hair bundle maturation, a process that enables hair cells to detect and transmit sound and balance signals effectively, therefore affecting auditory function. May act by regulating the level of phosphatidylinositol 4,5-bisphosphate (PIP2) level in the basal region of hair bundles. In Homo sapiens (Human), this protein is Phosphatidylinositol phosphatase PTPRQ (PTPRQ).